Here is a 344-residue protein sequence, read N- to C-terminus: Dihydroorotate dehydrogenase (quinone) (344 aa).

FMN is bound by residues 65–69 (AGLDK) and Thr-89. Lys-69 is a binding site for substrate. Residue 114 to 118 (NRMGF) coordinates substrate. Asn-145 and Asn-178 together coordinate FMN. Residue Asn-178 participates in substrate binding. Ser-181 (nucleophile) is an active-site residue. A substrate-binding site is contributed by Asn-183. Lys-223 and Thr-251 together coordinate FMN. 252-253 (NT) contacts substrate. FMN is bound by residues Gly-274, Gly-303, and 324–325 (YS).

Belongs to the dihydroorotate dehydrogenase family. Type 2 subfamily. In terms of assembly, monomer. The cofactor is FMN.

It is found in the cell membrane. The catalysed reaction is (S)-dihydroorotate + a quinone = orotate + a quinol. The protein operates within pyrimidine metabolism; UMP biosynthesis via de novo pathway; orotate from (S)-dihydroorotate (quinone route): step 1/1. Its function is as follows. Catalyzes the conversion of dihydroorotate to orotate with quinone as electron acceptor. This Cupriavidus taiwanensis (strain DSM 17343 / BCRC 17206 / CCUG 44338 / CIP 107171 / LMG 19424 / R1) (Ralstonia taiwanensis (strain LMG 19424)) protein is Dihydroorotate dehydrogenase (quinone).